The primary structure comprises 522 residues: Glucose-6-phosphate 1-dehydrogenase (522 aa).

Residues 40-47 (GASGDLAK), R74, and K177 contribute to the NADP(+) site. D-glucose 6-phosphate-binding positions include K177, 207 to 211 (HYLGK), E245, and D264. The Proton acceptor role is filled by H269. Residue R364 coordinates NADP(+). K367 and K372 together coordinate D-glucose 6-phosphate. 3 residues coordinate NADP(+): K373, R377, and R401. Q403 is a D-glucose 6-phosphate binding site. Residues 409–411 (YMK), 429–431 (DLT), R495, and W517 each bind NADP(+).

This sequence belongs to the glucose-6-phosphate dehydrogenase family.

Its subcellular location is the cytoplasm. The protein resides in the cytosol. It carries out the reaction D-glucose 6-phosphate + NADP(+) = 6-phospho-D-glucono-1,5-lactone + NADPH + H(+). It participates in carbohydrate degradation; pentose phosphate pathway; D-ribulose 5-phosphate from D-glucose 6-phosphate (oxidative stage): step 1/3. Functionally, cytosolic glucose-6-phosphate dehydrogenase that catalyzes the first and rate-limiting step of the oxidative branch within the pentose phosphate pathway/shunt, an alternative route to glycolysis for the dissimilation of carbohydrates and a major source of reducing power and metabolic intermediates for fatty acid and nucleic acid biosynthetic processes. This Caenorhabditis elegans protein is Glucose-6-phosphate 1-dehydrogenase (gspd-1).